A 46-amino-acid polypeptide reads, in one-letter code: Esculentin-1HSa (46 aa).

Residues Cys40 and Cys46 are joined by a disulfide bond.

Expressed by the skin glands.

It is found in the secreted. Its function is as follows. Has antibacterial activity against the Gram-positive bacterium S.aureus ATCC 25923 (MIC=12 uM) and the Gram-negative bacterium E.coli ATCC 25726 (MIC=12 uM). This is Esculentin-1HSa from Odorrana hosii (Hose's rock frog).